Here is a 438-residue protein sequence, read N- to C-terminus: MARFFQPKKKLQPESKHQQVLVEKLDHQGAGIAYLNKKPLFIDGTLPGEEVVTQLTESKSKFARGKLIKLLKPAAERVEPFCSHFNQCGGCDMQHMDYQAQLAYKQRTLLQLMKKFSGSEILLSPPVTGLEKAYRRRARVSLMWDKKSRQLQFGFRRKQSKQIENVTQCPVLVAELECLLPELKAILSHFHHPEHLGHVELVAADNGAVITLRHTGPLLDEDVAKLRQCAEQHQATLYLMPASDQLERISGEAPYYQEIGFKVPFEPNNFIQVNQKVNQQMVVQALEWLDPQSSDRVLDLFCGLGNFSLPIASKAKSVTGVEGVDDMVQKAALNASLNQINNAQFFHANLEQDFVGQPWASEKFDKILLDPARAGASGIIEQVSALGAKRVVYVSCNPATLARDSQSLLEQGYRLTKLGMLDMFPYTSHLESMALFEK.

One can recognise a TRAM domain in the interval 11–69 (LQPESKHQQVLVEKLDHQGAGIAYLNKKPLFIDGTLPGEEVVTQLTESKSKFARGKLIK). Positions 82, 88, 91, and 169 each coordinate [4Fe-4S] cluster. Positions 272, 301, 306, 322, 349, and 370 each coordinate S-adenosyl-L-methionine. The Nucleophile role is filled by Cys-396.

It belongs to the class I-like SAM-binding methyltransferase superfamily. RNA M5U methyltransferase family. RlmD subfamily.

The enzyme catalyses uridine(1939) in 23S rRNA + S-adenosyl-L-methionine = 5-methyluridine(1939) in 23S rRNA + S-adenosyl-L-homocysteine + H(+). Functionally, catalyzes the formation of 5-methyl-uridine at position 1939 (m5U1939) in 23S rRNA. The polypeptide is 23S rRNA (uracil(1939)-C(5))-methyltransferase RlmD (Vibrio vulnificus (strain YJ016)).